The primary structure comprises 69 residues: Large ribosomal subunit protein bL31 (69 aa).

Residues Cys16, Cys18, Cys37, and Cys40 each coordinate Zn(2+).

This sequence belongs to the bacterial ribosomal protein bL31 family. Type A subfamily. As to quaternary structure, part of the 50S ribosomal subunit. Zn(2+) is required as a cofactor.

Binds the 23S rRNA. The polypeptide is Large ribosomal subunit protein bL31 (Buchnera aphidicola subsp. Baizongia pistaciae (strain Bp)).